Reading from the N-terminus, the 644-residue chain is Exoribonuclease 2 (644 aa).

Residues 189–516 form the RNB domain; sequence RQDLTALNFV…NHRLLKAVIK (328 aa). Residues 561–643 form the S1 motif domain; the sequence is NTRFAAEIID…ETRSIIARPA (83 aa).

It belongs to the RNR ribonuclease family. RNase II subfamily.

It localises to the cytoplasm. The catalysed reaction is Exonucleolytic cleavage in the 3'- to 5'-direction to yield nucleoside 5'-phosphates.. In terms of biological role, involved in mRNA degradation. Hydrolyzes single-stranded polyribonucleotides processively in the 3' to 5' direction. The sequence is that of Exoribonuclease 2 from Salmonella agona (strain SL483).